The chain runs to 360 residues: Biotin synthase (360 aa).

The segment at 1 to 21 (MTQLNIAPASTDTAAASNNNA) is disordered. One can recognise a Radical SAM core domain in the interval 62 to 289 (NTVQLSTLLS…RAMVRLSAGR (228 aa)). Residues Cys77, Cys81, and Cys84 each contribute to the [4Fe-4S] cluster site. 4 residues coordinate [2Fe-2S] cluster: Cys121, Cys152, Cys212, and Arg284.

The protein belongs to the radical SAM superfamily. Biotin synthase family. Homodimer. It depends on [4Fe-4S] cluster as a cofactor. [2Fe-2S] cluster is required as a cofactor.

The enzyme catalyses (4R,5S)-dethiobiotin + (sulfur carrier)-SH + 2 reduced [2Fe-2S]-[ferredoxin] + 2 S-adenosyl-L-methionine = (sulfur carrier)-H + biotin + 2 5'-deoxyadenosine + 2 L-methionine + 2 oxidized [2Fe-2S]-[ferredoxin]. It participates in cofactor biosynthesis; biotin biosynthesis; biotin from 7,8-diaminononanoate: step 2/2. Functionally, catalyzes the conversion of dethiobiotin (DTB) to biotin by the insertion of a sulfur atom into dethiobiotin via a radical-based mechanism. The polypeptide is Biotin synthase (Paraburkholderia xenovorans (strain LB400)).